The chain runs to 302 residues: Sulfate adenylyltransferase subunit 2 (302 aa).

Belongs to the PAPS reductase family. CysD subfamily. Heterodimer composed of CysD, the smaller subunit, and CysN.

It catalyses the reaction sulfate + ATP + H(+) = adenosine 5'-phosphosulfate + diphosphate. Its pathway is sulfur metabolism; hydrogen sulfide biosynthesis; sulfite from sulfate: step 1/3. With CysN forms the ATP sulfurylase (ATPS) that catalyzes the adenylation of sulfate producing adenosine 5'-phosphosulfate (APS) and diphosphate, the first enzymatic step in sulfur assimilation pathway. APS synthesis involves the formation of a high-energy phosphoric-sulfuric acid anhydride bond driven by GTP hydrolysis by CysN coupled to ATP hydrolysis by CysD. This Yersinia enterocolitica serotype O:8 / biotype 1B (strain NCTC 13174 / 8081) protein is Sulfate adenylyltransferase subunit 2.